The following is a 1485-amino-acid chain: DNA topoisomerase 2 (1485 aa).

The segment covering 1 to 16 (MSIDADFSDYEDEASG) has biased composition (acidic residues). Positions 1–76 (MSIDADFSDY…NGNGNSNVST (76 aa)) are disordered. Positions 46–59 (DLRQTSLTSMTASE) are enriched in polar residues. Low complexity predominate over residues 64 to 76 (VTNNGNGNSNVST). Residues Asn136, Asn165, 193 to 195 (SSN), and 206 to 213 (GRNGYGAK) each bind ATP. The interaction with DNA stretch occupies residues 388–392 (KKENK). Residue 421-423 (QTK) participates in ATP binding. The Toprim domain occupies 499–613 (CVLILTEGDS…SLLQIPGFLI (115 aa)). The Mg(2+) site is built by Glu505, Asp582, and Asp584. The region spanning 745 to 1195 (IPSVVDGLKP…TPKELWLHDL (451 aa)) is the Topo IIA-type catalytic domain. The active-site O-(5'-phospho-DNA)-tyrosine intermediate is the Tyr835. Residues 1019–1028 (KLSRTQATSN) form an interaction with DNA region. Residues 1216-1225 (EEQSSRDFVN) are compositionally biased toward basic and acidic residues. The interval 1216–1485 (EEQSSRDFVN…EDVDDYDESD (270 aa)) is disordered. The segment covering 1226 to 1242 (RTKKKPRGKSTGTRKPR) has biased composition (basic residues). The span at 1260–1273 (ESKPSTTNRKQQTL) shows a compositional bias: polar residues. Positions 1278–1307 (ASKEPEKSSDINIVKTEDNSHGLSVEENRI) are enriched in basic and acidic residues. Ser1310 and Ser1345 each carry phosphoserine. Basic residues predominate over residues 1387–1396 (AKNKGKKASS). The span at 1413-1425 (GSSSTPKASSTNA) shows a compositional bias: polar residues. Phosphoserine is present on Ser1433. Acidic residues predominate over residues 1473 to 1485 (DNDEDVDDYDESD).

It belongs to the type II topoisomerase family. As to quaternary structure, homodimer. The cofactor is Mg(2+). Mn(2+) serves as cofactor. Requires Ca(2+) as cofactor. Phosphorylated at multiple sites at both extremities of the protein.

Its subcellular location is the nucleus. The catalysed reaction is ATP-dependent breakage, passage and rejoining of double-stranded DNA.. In terms of biological role, control of topological states of DNA by transient breakage and subsequent rejoining of DNA strands. Topoisomerase II makes double-strand breaks. In Schizosaccharomyces pombe (strain 972 / ATCC 24843) (Fission yeast), this protein is DNA topoisomerase 2 (top2).